The following is an 89-amino-acid chain: Elongation factor 1-beta (89 aa).

Belongs to the EF-1-beta/EF-1-delta family.

In terms of biological role, promotes the exchange of GDP for GTP in EF-1-alpha/GDP, thus allowing the regeneration of EF-1-alpha/GTP that could then be used to form the ternary complex EF-1-alpha/GTP/AAtRNA. The chain is Elongation factor 1-beta from Methanococcus maripaludis (strain C7 / ATCC BAA-1331).